A 653-amino-acid chain; its full sequence is MPGVVRLLALLLVPLLLGSARGLHNATQRTFQIDYRRNRFLKDGQPFRYISGSIHYFRVPRFYWKDRLLKMKMAGLNAIQTYVAWNFHELQPGRYNFSGDHDVEHFIQLAHELGLLVILRPGPYICAEWDMGGLPAWLLEKKSIVLRSSDPDYLAAVDKWLGVLLPKMRPLLYKNGGPIITVQVENEYGSYLSCDYDYLRFLQKRFHDHLGEDVLLFTTDGVNERLLQCGALQGLYATVDFSPGTNLTAAFMLQRKFEPTGPLVNSEFYTGWLDHWGQRHSTVSSKAVAFTLHDMLALGANVNMYMFIGGTNFAYWNGANIPYQPQPTSYDYDAPLSEAGDLTEKYFALRDIIQKFAKVPEGPIPPSTPKFAYGKVALNKLKTVEDALNILCPSGPIKSVYPLTFIDVKQYFGFVLYRTMLPEDCSDPTPLSSPLSGVHDRAYVSVNGVAQGILERESVITLNITGKAGATLDLLVENMGRVNYGSSINDFKGLVSNLTLGSKILTNWEIFPLDMEDAVRSHLGTWGGRDRGYHNKARAHSPPTYALPTFYVGNFTIPSGIADLPQDTFIQFPGWTKGQVWINGFNLGRYWPVRGPQMTLFVPQHILVTSTPNTIVVLELEHAPCQDGGPELCTVEFVDKPVFRTVQTHRHAN.

An N-terminal signal peptide occupies residues 1-22; that stretch reads MPGVVRLLALLLVPLLLGSARG. Residues 23–27 constitute a propeptide that is removed on maturation; that stretch reads LHNAT. Asn-25 carries N-linked (GlcNAc...) asparagine glycosylation. A substrate-binding site is contributed by Tyr-82. A glycan (N-linked (GlcNAc...) asparagine) is linked at Asn-96. Substrate-binding residues include Glu-128 and Asn-186. Glu-187 functions as the Proton donor in the catalytic mechanism. A disulfide bridge connects residues Cys-194 and Cys-229. Asn-246 carries an N-linked (GlcNAc...) asparagine glycan. Glu-267 functions as the Nucleophile in the catalytic mechanism. Tyr-332 contributes to the substrate binding site. 3 N-linked (GlcNAc...) asparagine glycosylation sites follow: Asn-463, Asn-497, and Asn-554. Cys-625 and Cys-633 are joined by a disulfide.

The protein belongs to the glycosyl hydrolase 35 family. As to quaternary structure, homodimer. May form higher multimers.

It is found in the lysosome. It catalyses the reaction Hydrolysis of terminal non-reducing beta-D-galactose residues in beta-D-galactosides.. Cleaves beta-linked terminal galactosyl residues from gangliosides, glycoproteins, and glycosaminoglycans. The protein is Beta-galactosidase (GLB1) of Bos taurus (Bovine).